We begin with the raw amino-acid sequence, 582 residues long: ATP-dependent lipid A-core flippase (582 aa).

5 helical membrane passes run 16-36 (LWPM…ALII), 63-83 (VLLW…ASGF), 153-173 (IIGL…ILIV), 253-273 (PIIQ…ASFP), and 275-295 (VMET…IALM). In terms of domain architecture, ABC transmembrane type-1 spans 28–310 (AVAAIALIIN…LTNVNAQFQR (283 aa)). The region spanning 342–578 (LEFRQVNFAY…NGAYAQLHRM (237 aa)) is the ABC transporter domain. 376–383 (GRSGSGKS) is an ATP binding site.

The protein belongs to the ABC transporter superfamily. Lipid exporter (TC 3.A.1.106) family. In terms of assembly, homodimer.

Its subcellular location is the cell inner membrane. The catalysed reaction is ATP + H2O + lipid A-core oligosaccharideSide 1 = ADP + phosphate + lipid A-core oligosaccharideSide 2.. In terms of biological role, involved in lipopolysaccharide (LPS) biosynthesis. Translocates lipid A-core from the inner to the outer leaflet of the inner membrane. Transmembrane domains (TMD) form a pore in the inner membrane and the ATP-binding domain (NBD) is responsible for energy generation. The polypeptide is ATP-dependent lipid A-core flippase (Pectobacterium atrosepticum (strain SCRI 1043 / ATCC BAA-672) (Erwinia carotovora subsp. atroseptica)).